A 95-amino-acid polypeptide reads, in one-letter code: Sec-independent protein translocase protein TatA (95 aa).

A helical membrane pass occupies residues 1-21 (MGSMSVWHWVIVAVVVMLLFG). Residues 42–95 (GMADDETQPNTATSVPPVGPNDPVRTLPHQGAPGTAPQPPHVQPHVSAGDHKAV) form a disordered region.

Belongs to the TatA/E family. In terms of assembly, the Tat system comprises two distinct complexes: a TatABC complex, containing multiple copies of TatA, TatB and TatC subunits, and a separate TatA complex, containing only TatA subunits. Substrates initially bind to the TatABC complex, which probably triggers association of the separate TatA complex to form the active translocon.

The protein localises to the cell inner membrane. Its function is as follows. Part of the twin-arginine translocation (Tat) system that transports large folded proteins containing a characteristic twin-arginine motif in their signal peptide across membranes. TatA could form the protein-conducting channel of the Tat system. This is Sec-independent protein translocase protein TatA from Methylorubrum extorquens (strain CM4 / NCIMB 13688) (Methylobacterium extorquens).